The sequence spans 418 residues: Light-independent protochlorophyllide reductase subunit N (418 aa).

3 residues coordinate [4Fe-4S] cluster: C17, C42, and C103.

It belongs to the BchN/ChlN family. As to quaternary structure, protochlorophyllide reductase is composed of three subunits; ChlL, ChlN and ChlB. Forms a heterotetramer of two ChlB and two ChlN subunits. [4Fe-4S] cluster serves as cofactor.

It carries out the reaction chlorophyllide a + oxidized 2[4Fe-4S]-[ferredoxin] + 2 ADP + 2 phosphate = protochlorophyllide a + reduced 2[4Fe-4S]-[ferredoxin] + 2 ATP + 2 H2O. It participates in porphyrin-containing compound metabolism; chlorophyll biosynthesis (light-independent). Component of the dark-operative protochlorophyllide reductase (DPOR) that uses Mg-ATP and reduced ferredoxin to reduce ring D of protochlorophyllide (Pchlide) to form chlorophyllide a (Chlide). This reaction is light-independent. The NB-protein (ChlN-ChlB) is the catalytic component of the complex. The chain is Light-independent protochlorophyllide reductase subunit N from Prochlorococcus marinus (strain NATL2A).